The chain runs to 423 residues: MKSRIFFITLLTIVAAQESADQLCSSFDAQQSCGQCIKAHAECAWCIDPHSSLTNRCQLKSKFTNETCTPHLVYSPQTAQVKIQQNLPLETKQHDGKTIVRQQPQAVSVRLMPSHSATVSFKYLHQTDPSRRSTEPETMEIQTSDVKDTPLQLKFFIVCDGELKETKSCRVQNNQIVEFKIEVLVNSCSSTGDITLSVGILRQRTIAGLYVTTICGCECEKHPEINSRLCHQNGHLVCGQCVCDQSRGGDKCECPLASHGVSKASELEDKCRFNSSSPVCSASGKCKCGQCQCNKPTVTGKFCQCDNDSCPLAVNGKVCSGNGVCDCGVCKCEMGWERDDCSCSTASNNCVDNGTPAPEEKDKPESVPEEPEATEKPDDMPSDSDLEKELDESSSAKEEQTSSSGVVSRVCVLLTFFLLVLNF.

The first 16 residues, 1–16 (MKSRIFFITLLTIVAA), serve as a signal peptide directing secretion. The Extracellular segment spans residues 17 to 402 (QESADQLCSS…SSSAKEEQTS (386 aa)). Cystine bridges form between Cys-24-Cys-217, Cys-33-Cys-43, Cys-36-Cys-68, Cys-46-Cys-57, Cys-219-Cys-238, Cys-230-Cys-241, Cys-243-Cys-252, Cys-254-Cys-288, Cys-271-Cys-286, Cys-280-Cys-291, Cys-293-Cys-303, Cys-305-Cys-327, Cys-310-Cys-325, Cys-319-Cys-330, Cys-332-Cys-341, and Cys-343-Cys-350. Asn-65 carries N-linked (GlcNAc...) asparagine glycosylation. The cysteine-rich tandem repeats stretch occupies residues 215 to 350 (CGCECEKHPE…CSCSTASNNC (136 aa)). I-EGF domains lie at 219-253 (CEKHPEINSRLCHQNGHLVCGQCVCDQSRGGDKCE), 254-304 (CPLA…KFCQ), and 305-342 (CDNDSCPLAVNGKVCSGNGVCDCGVCKCEMGWERDDCS). Asn-274 carries an N-linked (GlcNAc...) asparagine glycan. The N-linked (GlcNAc...) asparagine glycan is linked to Asn-307. The tract at residues 354–406 (GTPAPEEKDKPESVPEEPEATEKPDDMPSDSDLEKELDESSSAKEEQTSSSGV) is disordered. Residues 380-392 (MPSDSDLEKELDE) are compositionally biased toward acidic residues. The helical transmembrane segment at 403–421 (SSGVVSRVCVLLTFFLLVL) threads the bilayer. Residues 422–423 (NF) lie on the Cytoplasmic side of the membrane.

Belongs to the integrin beta chain family.

The protein localises to the membrane. This is an uncharacterized protein from Caenorhabditis elegans.